Reading from the N-terminus, the 185-residue chain is Elongation factor P (185 aa).

It belongs to the elongation factor P family.

It is found in the cytoplasm. It participates in protein biosynthesis; polypeptide chain elongation. Its function is as follows. Involved in peptide bond synthesis. Stimulates efficient translation and peptide-bond synthesis on native or reconstituted 70S ribosomes in vitro. Probably functions indirectly by altering the affinity of the ribosome for aminoacyl-tRNA, thus increasing their reactivity as acceptors for peptidyl transferase. In Metamycoplasma arthritidis (strain 158L3-1) (Mycoplasma arthritidis), this protein is Elongation factor P.